We begin with the raw amino-acid sequence, 160 residues long: Non-secretory ribonuclease (160 aa).

The N-terminal stretch at 1-27 (MVPKLFTSPICLLLLLGLMGVEGSLHA) is a signal peptide. Tryptophan 34 carries a C-linked (Man) tryptophan glycan. Catalysis depends on histidine 42, which acts as the Proton acceptor. N-linked (GlcNAc...) asparagine glycosylation is present at asparagine 44. 4 cysteine pairs are disulfide-bonded: cysteine 50–cysteine 110, cysteine 64–cysteine 122, cysteine 82–cysteine 137, and cysteine 89–cysteine 98. A 3'-nitrotyrosine modification is found at tyrosine 60. 65-69 (KNQNT) lines the substrate pocket. N-linked (GlcNAc...) asparagine glycosylation is found at asparagine 92, asparagine 111, and asparagine 138. The active-site Proton donor is the histidine 155.

It belongs to the pancreatic ribonuclease family. In terms of assembly, interacts with and forms a tight 1:1 complex with RNH1. Dimerization of two such complexes may occur.

It localises to the lysosome. It is found in the cytoplasmic granule. The enzyme catalyses an [RNA] containing cytidine + H2O = an [RNA]-3'-cytidine-3'-phosphate + a 5'-hydroxy-ribonucleotide-3'-[RNA].. It catalyses the reaction an [RNA] containing uridine + H2O = an [RNA]-3'-uridine-3'-phosphate + a 5'-hydroxy-ribonucleotide-3'-[RNA].. Its function is as follows. This is a non-secretory ribonuclease. It is a pyrimidine specific nuclease with a slight preference for U. Cytotoxin and helminthotoxin. Possesses a wide variety of biological activities. This is Non-secretory ribonuclease (RNASE2) from Macaca nemestrina (Pig-tailed macaque).